We begin with the raw amino-acid sequence, 445 residues long: Phosphoglucosamine mutase (445 aa).

The Phosphoserine intermediate role is filled by Ser-101. Residues Ser-101, Asp-240, Asp-242, and Asp-244 each coordinate Mg(2+). The residue at position 101 (Ser-101) is a Phosphoserine.

It belongs to the phosphohexose mutase family. The cofactor is Mg(2+). In terms of processing, activated by phosphorylation.

It catalyses the reaction alpha-D-glucosamine 1-phosphate = D-glucosamine 6-phosphate. Functionally, catalyzes the conversion of glucosamine-6-phosphate to glucosamine-1-phosphate. The polypeptide is Phosphoglucosamine mutase (Pseudomonas paraeruginosa (strain DSM 24068 / PA7) (Pseudomonas aeruginosa (strain PA7))).